Here is a 523-residue protein sequence, read N- to C-terminus: Spastin (523 aa).

Over 1–41 (MLDKLSKHKTMFYERVKEIDQILFSQQQAKQTQLDNLSNNN) the chain is Cytoplasmic. An intramembrane region (helical) is located at residues 42 to 58 (ASGGFFSGFMKMFSPLS). Composition is skewed to low complexity over residues 57–71 (LSTP…NSNT), 171–184 (QQPP…QQQP), and 193–210 (TALR…TANN). Disordered stretches follow at residues 57–77 (LSTP…AISQ) and 129–218 (GISS…LDQI). At 59–523 (TPPNSSSNNN…ESYGTFAKGI (465 aa)) the chain is on the cytoplasmic side.

This sequence belongs to the AAA ATPase family. Spastin subfamily. As to quaternary structure, homohexamer. The homohexamer is stabilized by ATP-binding. The homohexamer may adopt a ring conformation through which microtubules pass prior to being severed.

It localises to the membrane. It catalyses the reaction n ATP + n H2O + a microtubule = n ADP + n phosphate + (n+1) alpha/beta tubulin heterodimers.. In terms of biological role, ATP-dependent microtubule severing protein. Stimulates microtubule minus-end depolymerization and poleward microtubule flux in the mitotic spindle. The sequence is that of Spastin from Naegleria gruberi (Amoeba).